We begin with the raw amino-acid sequence, 153 residues long: Transcription antitermination protein NusB (153 aa).

It belongs to the NusB family.

In terms of biological role, involved in transcription antitermination. Required for transcription of ribosomal RNA (rRNA) genes. Binds specifically to the boxA antiterminator sequence of the ribosomal RNA (rrn) operons. The sequence is that of Transcription antitermination protein NusB from Beutenbergia cavernae (strain ATCC BAA-8 / DSM 12333 / CCUG 43141 / JCM 11478 / NBRC 16432 / NCIMB 13614 / HKI 0122).